The following is a 371-amino-acid chain: Isopentenyl-diphosphate delta-isomerase (371 aa).

A substrate-binding site is contributed by 9 to 10; that stretch reads RK. FMN is bound by residues Thr-66, 67–69, Ser-100, and Asn-128; that span reads GMT. 100 to 102 contributes to the substrate binding site; it reads SQR. Gln-167 lines the substrate pocket. Glu-168 lines the Mg(2+) pocket. FMN contacts are provided by residues Lys-199, Ser-224, Thr-229, 278–280, and 299–300; these read GMR and AL.

It belongs to the IPP isomerase type 2 family. As to quaternary structure, homooctamer. Dimer of tetramers. Requires FMN as cofactor. NADPH is required as a cofactor. It depends on Mg(2+) as a cofactor.

It localises to the cytoplasm. It carries out the reaction isopentenyl diphosphate = dimethylallyl diphosphate. In terms of biological role, involved in the biosynthesis of isoprenoids. Catalyzes the 1,3-allylic rearrangement of the homoallylic substrate isopentenyl (IPP) to its allylic isomer, dimethylallyl diphosphate (DMAPP). This Pyrococcus horikoshii (strain ATCC 700860 / DSM 12428 / JCM 9974 / NBRC 100139 / OT-3) protein is Isopentenyl-diphosphate delta-isomerase.